Here is a 487-residue protein sequence, read N- to C-terminus: MAFNLSKIFAHTDRDPLIRELTLDSRNVRPGDLFLAVPGIKVDGRAHIADALKRGAAAVAYEVEGATVLPITDVPLIPVKGLAAQLSDVAGRFYGDPSRSLNLVGVTGTNGKTSVTQLVAQALDALGQRCGIVGTLGTGFYGALQSGRHTTPDPIAVQAALTDLRKAGARAVAMEVSSHGLDQGRATALAFDVAVLTNLSRDHLDYHGTMEAYAAAKAKLFAWPNLNCRVINLDDDFGRELAGLKQESRLITYSQLDSSAYLYCRDAKFDDDGVRATLVTPQGEHFLRSSLLGRFNLSNVLAAVGALLGLDYALDEILKVLPKLEGPVGRMQRLGGADKPLVVVDYAHTPDALEKVLEALRPHAKGRLLCLFGCGGDRDRGKRPLMAEVVERLADGVWVTDDNPRSEAPTNIFDDIRPGFVTADKVRFIEGRGQAIAELIASATVDDVVVLAGKGHEDYQEIDGKRQPFSDLEEAATALAAWGPEND.

Residues Leu23 and Ser25 each coordinate UDP-N-acetyl-alpha-D-muramoyl-L-alanyl-D-glutamate. 108–114 (GTNGKTS) contributes to the ATP binding site. UDP-N-acetyl-alpha-D-muramoyl-L-alanyl-D-glutamate-binding positions include 150 to 151 (TT), Ser177, Gln183, and Arg185. The residue at position 217 (Lys217) is an N6-carboxylysine. Residues Arg378, 402–405 (DNPR), Gly453, and Glu457 contribute to the meso-2,6-diaminopimelate site. The short motif at 402–405 (DNPR) is the Meso-diaminopimelate recognition motif element.

This sequence belongs to the MurCDEF family. MurE subfamily. Requires Mg(2+) as cofactor. Post-translationally, carboxylation is probably crucial for Mg(2+) binding and, consequently, for the gamma-phosphate positioning of ATP.

It localises to the cytoplasm. It catalyses the reaction UDP-N-acetyl-alpha-D-muramoyl-L-alanyl-D-glutamate + meso-2,6-diaminopimelate + ATP = UDP-N-acetyl-alpha-D-muramoyl-L-alanyl-gamma-D-glutamyl-meso-2,6-diaminopimelate + ADP + phosphate + H(+). Its pathway is cell wall biogenesis; peptidoglycan biosynthesis. Its function is as follows. Catalyzes the addition of meso-diaminopimelic acid to the nucleotide precursor UDP-N-acetylmuramoyl-L-alanyl-D-glutamate (UMAG) in the biosynthesis of bacterial cell-wall peptidoglycan. In Pseudomonas syringae pv. tomato (strain ATCC BAA-871 / DC3000), this protein is UDP-N-acetylmuramoyl-L-alanyl-D-glutamate--2,6-diaminopimelate ligase.